The chain runs to 622 residues: Auxin efflux carrier component 1 (622 aa).

Residues 1–6 (MITAAD) lie on the Extracellular side of the membrane. A helical transmembrane segment spans residues 7-27 (FYHVMTAMVPLYVAMILAYGS). The Cytoplasmic portion of the chain corresponds to 28–44 (VKWWKIFTPDQCSGINR). A helical membrane pass occupies residues 45–65 (FVALFAVPLLSFHFIAANNPY). A (indol-3-yl)acetate-binding site is contributed by V51. At 66 to 70 (AMNLR) the chain is on the extracellular side. The helical transmembrane segment at 71-91 (FLAADSLQKVIVLSLLFLWCK) threads the bilayer. At 92-100 (LSRNGSLDW) the chain is on the cytoplasmic side. The chain crosses the membrane as a helical span at residues 101–121 (TITLFSLSTLPNTLVMGIPLL). 2 residues coordinate (indol-3-yl)acetate: N112 and L114. Over 122–131 (KGMYGNFSGD) the chain is Extracellular. A glycan (N-linked (GlcNAc...) asparagine) is linked at N127. A helical transmembrane segment spans residues 132–152 (LMVQIVVLQCIIWYTLMLFLF). A (indol-3-yl)acetate-binding site is contributed by Y145. At 153-482 (EYRGAKLLIS…LIRNPNSYSS (330 aa)) the chain is on the cytoplasmic side. 4 positions are modified to phosphoserine: S209, S212, S221, and S225. The tract at residues 213 to 233 (RSDIYSRRSQGLSATPRPSNL) is disordered. T227 is modified (phosphothreonine). S231 carries the phosphoserine modification. Position 248 is a phosphothreonine (T248). A phosphoserine mark is found at S252, S253, and S271. Residues 268–362 (GRNSNFGPGE…PVVGGKRQDG (95 aa)) form a disordered region. A Phosphothreonine modification is found at T286. S290 bears the Phosphoserine mark. The span at 298-311 (PAKPTAAGTAAGAG) shows a compositional bias: low complexity. Position 302 is a phosphothreonine (T302). 3 positions are modified to phosphoserine: S317, S320, and S337. T340 carries the phosphothreonine modification. Residues S374, S377, S408, S414, S426, S434, and S446 each carry the phosphoserine modification. Residues 483-503 (LFGITWSLISFKWNIEMPALI) form a helical membrane-spanning segment. Over 504-506 (AKS) the chain is Extracellular. Residues 507-527 (ISILSDAGLGMAMFSLGLFMA) traverse the membrane as a helical segment. Over 528–541 (LNPRIIACGNRRAA) the chain is Cytoplasmic. Residues 542–562 (FAAAMRFVVGPAVMLVASYAV) traverse the membrane as a helical segment. The Extracellular portion of the chain corresponds to 563-566 (GLRG). A helical transmembrane segment spans residues 567 to 587 (VLLHVAIIQAALPQGIVPFVF). The (indol-3-yl)acetate site is built by I582 and V583. The Cytoplasmic portion of the chain corresponds to 588–601 (AKEYNVHPDILSTA). The chain crosses the membrane as a helical span at residues 602-622 (VIFGMLIALPITLLYYILLGL).

The protein belongs to the auxin efflux carrier (TC 2.A.69.1) family. Homodimer. Interacts with TOPP4. Interacts with FYPP1 and FYPP3. Component of a complex made of PINs (e.g. PIN1 and PIN2), MAB4/MELs (e.g. NPY1/MAB4 and NPY5/MEL1) and AGC kinases (e.g. D6PK and PID) at the plasma membrane. Binds directly to NPY5/MEL1. In terms of tissue distribution, expressed at the basal side of elongated parenchymatous xylem cells.

The protein resides in the cell membrane. Auxin efflux carrier activity is competitively inhibited by naptalamate (N-1-naphthylphthalamic acid, NPA) but activated by D6PK-mediated phosphorylation. Acts as a component of the auxin efflux carrier; this activity is enhanced when activated by D6PK-mediated phosphorylation. Binds auxins including indole-3-acetic acid (IAA), indole-3-butyric acid (IBA), indole-3-propionic acid (IPA) and 4-chloroindole-3-acetic acid (4-Cl-IAA). Seems to be involved in the basipetal auxin transport. Mediates the formation of auxin gradient which is required to ensure correct organogenesis. Coordinated polar localization of PIN1 is directly regulated by the vesicle trafficking process and apical-basal PIN1 polarity also depends on the phosphorylation of conserved serine residues by PID kinase. The ARF-GEF protein GNOM is required for the correct recycling of PIN1 between the plasma membrane and endosomal compartments. Recrutes NPY proteins (e.g. NPY1/MAB4 and NPY5/MEL1) to the plasma membrane in a polar basal localization in root epidermis; this activity is optimized by AGC kinases-mediated (e.g. D6PK and PID) phosphorylation that limits their lateral diffusion-based escape. The protein is Auxin efflux carrier component 1 of Arabidopsis thaliana (Mouse-ear cress).